Here is a 247-residue protein sequence, read N- to C-terminus: Uroporphyrinogen-III C-methyltransferase (247 aa).

S-adenosyl-L-homocysteine contacts are provided by residues P12, 117-118, M168, A197, and A225; that span reads TA.

It belongs to the precorrin methyltransferase family.

It carries out the reaction uroporphyrinogen III + 2 S-adenosyl-L-methionine = precorrin-2 + 2 S-adenosyl-L-homocysteine + H(+). The protein operates within cofactor biosynthesis; adenosylcobalamin biosynthesis; precorrin-2 from uroporphyrinogen III: step 1/1. Its pathway is porphyrin-containing compound metabolism; siroheme biosynthesis; precorrin-2 from uroporphyrinogen III: step 1/1. Catalyzes the two successive C-2 and C-7 methylation reactions involved in the conversion of uroporphyrinogen III to precorrin-2 via the intermediate formation of precorrin-1. It is a step in the biosynthesis of both cobalamin (vitamin B12) and siroheme. The protein is Uroporphyrinogen-III C-methyltransferase of Pseudomonas fluorescens.